Reading from the N-terminus, the 445-residue chain is GTPase Der (445 aa).

EngA-type G domains lie at 3–167 (PVIA…YAGQ) and 180–353 (IKIA…AAAM). Residues 9 to 16 (GRPNVGKS), 56 to 60 (DTGGF), 119 to 122 (NKAE), 186 to 193 (GRPNVGKS), 233 to 237 (DTAGL), and 298 to 301 (NKWD) each bind GTP. In terms of domain architecture, KH-like spans 354–438 (AKLPTPKLTR…PLRIEFRSSN (85 aa)).

This sequence belongs to the TRAFAC class TrmE-Era-EngA-EngB-Septin-like GTPase superfamily. EngA (Der) GTPase family. In terms of assembly, associates with the 50S ribosomal subunit.

In terms of biological role, GTPase that plays an essential role in the late steps of ribosome biogenesis. This is GTPase Der from Burkholderia vietnamiensis (strain G4 / LMG 22486) (Burkholderia cepacia (strain R1808)).